The chain runs to 226 residues: Large ribosomal subunit protein uL3 (226 aa).

Positions M135–V150 are enriched in polar residues. The segment at M135–Q158 is disordered. Q158 is modified (N5-methylglutamine).

This sequence belongs to the universal ribosomal protein uL3 family. Part of the 50S ribosomal subunit. Forms a cluster with proteins L14 and L19. In terms of processing, methylated by PrmB.

In terms of biological role, one of the primary rRNA binding proteins, it binds directly near the 3'-end of the 23S rRNA, where it nucleates assembly of the 50S subunit. The protein is Large ribosomal subunit protein uL3 of Variovorax paradoxus (strain S110).